Here is a 496-residue protein sequence, read N- to C-terminus: Glutamyl-tRNA(Gln) amidotransferase subunit A (496 aa).

Active-site charge relay system residues include Lys-75 and Ser-150. Ser-174 serves as the catalytic Acyl-ester intermediate.

Belongs to the amidase family. GatA subfamily. Heterotrimer of A, B and C subunits.

The enzyme catalyses L-glutamyl-tRNA(Gln) + L-glutamine + ATP + H2O = L-glutaminyl-tRNA(Gln) + L-glutamate + ADP + phosphate + H(+). Its function is as follows. Allows the formation of correctly charged Gln-tRNA(Gln) through the transamidation of misacylated Glu-tRNA(Gln) in organisms which lack glutaminyl-tRNA synthetase. The reaction takes place in the presence of glutamine and ATP through an activated gamma-phospho-Glu-tRNA(Gln). The sequence is that of Glutamyl-tRNA(Gln) amidotransferase subunit A from Burkholderia cenocepacia (strain HI2424).